The primary structure comprises 634 residues: DNA mismatch repair protein MutL (634 aa).

The segment at 406-427 (HTHHNDTKGSVHTKSFSARSSS) is disordered.

This sequence belongs to the DNA mismatch repair MutL/HexB family.

In terms of biological role, this protein is involved in the repair of mismatches in DNA. It is required for dam-dependent methyl-directed DNA mismatch repair. May act as a 'molecular matchmaker', a protein that promotes the formation of a stable complex between two or more DNA-binding proteins in an ATP-dependent manner without itself being part of a final effector complex. The polypeptide is DNA mismatch repair protein MutL (Anaplasma phagocytophilum (strain HZ)).